We begin with the raw amino-acid sequence, 391 residues long: Erythronate-4-phosphate dehydrogenase (391 aa).

Residues S45 and T67 each contribute to the substrate site. 2 residues coordinate NAD(+): D147 and T176. R209 is an active-site residue. D238 contacts NAD(+). Residue E243 is part of the active site. The active-site Proton donor is the H260. NAD(+) is bound at residue G263. Residue Y264 participates in substrate binding.

It belongs to the D-isomer specific 2-hydroxyacid dehydrogenase family. PdxB subfamily. In terms of assembly, homodimer.

It is found in the cytoplasm. The catalysed reaction is 4-phospho-D-erythronate + NAD(+) = (R)-3-hydroxy-2-oxo-4-phosphooxybutanoate + NADH + H(+). It functions in the pathway cofactor biosynthesis; pyridoxine 5'-phosphate biosynthesis; pyridoxine 5'-phosphate from D-erythrose 4-phosphate: step 2/5. Its function is as follows. Catalyzes the oxidation of erythronate-4-phosphate to 3-hydroxy-2-oxo-4-phosphonooxybutanoate. This Photobacterium profundum (strain SS9) protein is Erythronate-4-phosphate dehydrogenase.